The following is a 57-amino-acid chain: UPF0391 membrane protein XC_2938 (57 aa).

Transmembrane regions (helical) follow at residues 4–24 and 33–53; these read WAII…GGMA and FLFW…MTIA.

Belongs to the UPF0391 family.

The protein resides in the cell membrane. This chain is UPF0391 membrane protein XC_2938, found in Xanthomonas campestris pv. campestris (strain 8004).